Here is a 379-residue protein sequence, read N- to C-terminus: UDP-4-amino-4-deoxy-L-arabinose--oxoglutarate aminotransferase (379 aa).

Lys-182 is modified (N6-(pyridoxal phosphate)lysine).

The protein belongs to the DegT/DnrJ/EryC1 family. ArnB subfamily. In terms of assembly, homodimer. Requires pyridoxal 5'-phosphate as cofactor.

It catalyses the reaction UDP-4-amino-4-deoxy-beta-L-arabinose + 2-oxoglutarate = UDP-beta-L-threo-pentopyranos-4-ulose + L-glutamate. Its pathway is nucleotide-sugar biosynthesis; UDP-4-deoxy-4-formamido-beta-L-arabinose biosynthesis; UDP-4-deoxy-4-formamido-beta-L-arabinose from UDP-alpha-D-glucuronate: step 2/3. It participates in bacterial outer membrane biogenesis; lipopolysaccharide biosynthesis. Functionally, catalyzes the conversion of UDP-4-keto-arabinose (UDP-Ara4O) to UDP-4-amino-4-deoxy-L-arabinose (UDP-L-Ara4N). The modified arabinose is attached to lipid A and is required for resistance to polymyxin and cationic antimicrobial peptides. This chain is UDP-4-amino-4-deoxy-L-arabinose--oxoglutarate aminotransferase, found in Shigella sonnei (strain Ss046).